The primary structure comprises 664 residues: Glycine--tRNA ligase beta subunit (664 aa).

The protein belongs to the class-II aminoacyl-tRNA synthetase family. Tetramer of two alpha and two beta subunits.

The protein localises to the cytoplasm. The catalysed reaction is tRNA(Gly) + glycine + ATP = glycyl-tRNA(Gly) + AMP + diphosphate. The polypeptide is Glycine--tRNA ligase beta subunit (Rickettsia africae (strain ESF-5)).